We begin with the raw amino-acid sequence, 464 residues long: Chromosomal replication initiator protein DnaA (464 aa).

Residues 1–90 (MNNDNTEVLE…KYWQDEDQSI (90 aa)) form a domain I, interacts with DnaA modulators region. Residues 90–126 (ICSVDICVVSNQDPNLLVDIKDRVDRGIKGNCDNVSS) form a domain II region. The tract at residues 127 to 345 (PLDPRFTFDN…GALNKVVAHS (219 aa)) is domain III, AAA+ region. ATP contacts are provided by glycine 173, glycine 175, lysine 176, and threonine 177. The tract at residues 346–464 (SLVGCSITLD…DINLLNRMLR (119 aa)) is domain IV, binds dsDNA.

The protein belongs to the DnaA family. Oligomerizes as a right-handed, spiral filament on DNA at oriC.

The protein localises to the cytoplasm. In terms of biological role, plays an essential role in the initiation and regulation of chromosomal replication. ATP-DnaA binds to the origin of replication (oriC) to initiate formation of the DNA replication initiation complex once per cell cycle. Binds the DnaA box (a 9 base pair repeat at the origin) and separates the double-stranded (ds)DNA. Forms a right-handed helical filament on oriC DNA; dsDNA binds to the exterior of the filament while single-stranded (ss)DNA is stabiized in the filament's interior. The ATP-DnaA-oriC complex binds and stabilizes one strand of the AT-rich DNA unwinding element (DUE), permitting loading of DNA polymerase. After initiation quickly degrades to an ADP-DnaA complex that is not apt for DNA replication. Binds acidic phospholipids. The chain is Chromosomal replication initiator protein DnaA from Ehrlichia ruminantium (strain Gardel).